A 360-amino-acid chain; its full sequence is Peptide chain release factor 1 (360 aa).

Q235 is subject to N5-methylglutamine.

Belongs to the prokaryotic/mitochondrial release factor family. In terms of processing, methylated by PrmC. Methylation increases the termination efficiency of RF1.

It is found in the cytoplasm. Peptide chain release factor 1 directs the termination of translation in response to the peptide chain termination codons UAG and UAA. The sequence is that of Peptide chain release factor 1 from Dechloromonas aromatica (strain RCB).